The primary structure comprises 57 residues: Small ribosomal subunit protein bS21B (57 aa).

Residues 37-57 form a disordered region; that stretch reads RYEKPSARRKRKAEAARKRRR. Positions 43–57 are enriched in basic residues; the sequence is ARRKRKAEAARKRRR.

The protein belongs to the bacterial ribosomal protein bS21 family.

The chain is Small ribosomal subunit protein bS21B from Gloeobacter violaceus (strain ATCC 29082 / PCC 7421).